The chain runs to 289 residues: tRNA pseudouridine synthase B (289 aa).

Asp38 functions as the Nucleophile in the catalytic mechanism.

The protein belongs to the pseudouridine synthase TruB family. Type 1 subfamily.

The enzyme catalyses uridine(55) in tRNA = pseudouridine(55) in tRNA. Its function is as follows. Responsible for synthesis of pseudouridine from uracil-55 in the psi GC loop of transfer RNAs. The chain is tRNA pseudouridine synthase B from Clostridium kluyveri (strain ATCC 8527 / DSM 555 / NBRC 12016 / NCIMB 10680 / K1).